We begin with the raw amino-acid sequence, 476 residues long: tRNA(Ile)-lysidine synthase (476 aa).

Residue 30 to 35 (SGGPDS) participates in ATP binding.

The protein belongs to the tRNA(Ile)-lysidine synthase family.

Its subcellular location is the cytoplasm. It catalyses the reaction cytidine(34) in tRNA(Ile2) + L-lysine + ATP = lysidine(34) in tRNA(Ile2) + AMP + diphosphate + H(+). Its function is as follows. Ligates lysine onto the cytidine present at position 34 of the AUA codon-specific tRNA(Ile) that contains the anticodon CAU, in an ATP-dependent manner. Cytidine is converted to lysidine, thus changing the amino acid specificity of the tRNA from methionine to isoleucine. The polypeptide is tRNA(Ile)-lysidine synthase (Bacillus cereus (strain ZK / E33L)).